The chain runs to 136 residues: Psoriasis susceptibility 1 candidate gene 2 protein homolog (136 aa).

A signal peptide spans 1–22 (MILNWKLLGILVLCLHTRGISG). Residues 20 to 136 (ISGSEDHPSH…DLDPPREEYR (117 aa)) form a disordered region. Positions 23-33 (SEDHPSHPPAE) are enriched in basic and acidic residues. Pro residues-rich tracts occupy residues 44–74 (PQGPPVPGDPWPGAPPLFEDPPPPHPSPPWR) and 83–116 (PPEPPRTDPPQPPRPDDPWPAGPQPPENPWPPAP). Over residues 117-136 (EVDHRPQEEPDLDPPREEYR) the composition is skewed to basic and acidic residues.

It is found in the secreted. This chain is Psoriasis susceptibility 1 candidate gene 2 protein homolog (PSORS1C2), found in Pan troglodytes (Chimpanzee).